Consider the following 656-residue polypeptide: Methionine--tRNA ligase (656 aa).

A 'HIGH' region motif is present at residues 13–23; it reads YYPSGNLHIGH. Positions 308 to 312 match the 'KMSKS' region motif; the sequence is KMSKS. Lys-311 lines the ATP pocket. The tRNA-binding domain occupies 556 to 656; the sequence is DFDKVEIKAA…SAIPNGAVIK (101 aa).

It belongs to the class-I aminoacyl-tRNA synthetase family. MetG type 2B subfamily. Homodimer.

It localises to the cytoplasm. The catalysed reaction is tRNA(Met) + L-methionine + ATP = L-methionyl-tRNA(Met) + AMP + diphosphate. Its function is as follows. Is required not only for elongation of protein synthesis but also for the initiation of all mRNA translation through initiator tRNA(fMet) aminoacylation. The sequence is that of Methionine--tRNA ligase from Staphylococcus epidermidis (strain ATCC 12228 / FDA PCI 1200).